We begin with the raw amino-acid sequence, 380 residues long: Chaperone protein DnaJ (380 aa).

One can recognise a J domain in the interval 5–70 (DYYEVLGVAK…QKRAAYDQYG (66 aa)). The segment at 140-218 (GYDTQIRVPS…CHGAGKVKET (79 aa)) adopts a CR-type zinc-finger fold. Residues Cys153, Cys156, Cys170, Cys173, Cys192, Cys195, Cys206, and Cys209 each contribute to the Zn(2+) site. CXXCXGXG motif repeat units lie at residues 153 to 160 (CEVCHGSG), 170 to 177 (CPTCSGSG), 192 to 199 (CPKCHGTG), and 206 to 213 (CGHCHGAG).

Belongs to the DnaJ family. In terms of assembly, homodimer. Zn(2+) is required as a cofactor.

It localises to the cytoplasm. Its function is as follows. Participates actively in the response to hyperosmotic and heat shock by preventing the aggregation of stress-denatured proteins and by disaggregating proteins, also in an autonomous, DnaK-independent fashion. Unfolded proteins bind initially to DnaJ; upon interaction with the DnaJ-bound protein, DnaK hydrolyzes its bound ATP, resulting in the formation of a stable complex. GrpE releases ADP from DnaK; ATP binding to DnaK triggers the release of the substrate protein, thus completing the reaction cycle. Several rounds of ATP-dependent interactions between DnaJ, DnaK and GrpE are required for fully efficient folding. Also involved, together with DnaK and GrpE, in the DNA replication of plasmids through activation of initiation proteins. The polypeptide is Chaperone protein DnaJ (Paraburkholderia xenovorans (strain LB400)).